An 83-amino-acid chain; its full sequence is Protein Vpr (83 aa).

At serine 79 the chain carries Phosphoserine; by host.

Interacts with human UNG.

The protein resides in the virion. It is found in the host nucleus. Functionally, stimulates gene expression driven by the HIV-2 LTR. Prevents infected cells from undergoing mitosis and proliferating, by inducing arrest or delay in the G2 phase of the cell cycle. Cell cycle arrest creates a favorable environment for maximizing viral expression and production. This chain is Protein Vpr, found in Pan troglodytes (Chimpanzee).